The sequence spans 306 residues: Uricase (306 aa).

Catalysis depends on charge relay system residues K5 and T65. Residues T65, D66, F175, R192, I240, Q241, and N267 each contribute to the urate site. The disordered stretch occupies residues 281-306 (AKVLREPPRPTGYQQFSMDRSDLEEQ).

This sequence belongs to the uricase family.

It catalyses the reaction urate + O2 + H2O = 5-hydroxyisourate + H2O2. It functions in the pathway purine metabolism; urate degradation; (S)-allantoin from urate: step 1/3. In terms of biological role, catalyzes the oxidation of uric acid to 5-hydroxyisourate, which is further processed to form (S)-allantoin. The sequence is that of Uricase from Halalkalicoccus jeotgali (strain DSM 18796 / CECT 7217 / JCM 14584 / KCTC 4019 / B3).